A 339-amino-acid chain; its full sequence is F-box protein At3g22700 (339 aa).

The 49-residue stretch at 1 to 49 (MMSNLPLDLVEEILSRVPATSLKRLRSTCRQWNALLKDRRFTEKHFRKA) folds into the F-box domain.

The sequence is that of F-box protein At3g22700 from Arabidopsis thaliana (Mouse-ear cress).